Consider the following 293-residue polypeptide: Probable metal transport system membrane protein CT_417 (293 aa).

A run of 7 helical transmembrane segments spans residues 18-38, 41-61, 68-88, 101-121, 135-155, 187-207, and 242-262; these read SLLAAFGASIAAGIIGSYIVV, IVSISGSIAHSILGGVGIALW, LPISPLHGAIASAIFVAICIG, IISMIWSIGMAIGIICISKLP, ILWVTPQDLYFLGILDLFIVA, LLLILTAITTVVLMYVMGVIL, and FLGIMLAYLLDLPVGPVIAIL.

This sequence belongs to the ABC-3 integral membrane protein family.

It is found in the cell inner membrane. Its function is as follows. Part of an ATP-driven transport system CT_415/CT_416/CT_417 for a metal. This chain is Probable metal transport system membrane protein CT_417, found in Chlamydia trachomatis serovar D (strain ATCC VR-885 / DSM 19411 / UW-3/Cx).